Reading from the N-terminus, the 122-residue chain is Small ribosomal subunit protein uS13 (122 aa).

Residues 99–122 (RGQRTHTNARTRKGPAKAIAGKKK) are disordered.

Belongs to the universal ribosomal protein uS13 family. As to quaternary structure, part of the 30S ribosomal subunit. Forms a loose heterodimer with protein S19. Forms two bridges to the 50S subunit in the 70S ribosome.

Its function is as follows. Located at the top of the head of the 30S subunit, it contacts several helices of the 16S rRNA. In the 70S ribosome it contacts the 23S rRNA (bridge B1a) and protein L5 of the 50S subunit (bridge B1b), connecting the 2 subunits; these bridges are implicated in subunit movement. Contacts the tRNAs in the A and P-sites. In Sinorhizobium medicae (strain WSM419) (Ensifer medicae), this protein is Small ribosomal subunit protein uS13.